A 422-amino-acid polypeptide reads, in one-letter code: tRNA(Met) cytidine acetate ligase (422 aa).

ATP is bound by residues 7–20, G102, N172, and R197; that span reads ITEY…HLYH.

This sequence belongs to the TmcAL family.

It is found in the cytoplasm. It carries out the reaction cytidine(34) in elongator tRNA(Met) + acetate + ATP = N(4)-acetylcytidine(34) in elongator tRNA(Met) + AMP + diphosphate. Functionally, catalyzes the formation of N(4)-acetylcytidine (ac(4)C) at the wobble position of elongator tRNA(Met), using acetate and ATP as substrates. First activates an acetate ion to form acetyladenylate (Ac-AMP) and then transfers the acetyl group to tRNA to form ac(4)C34. The chain is tRNA(Met) cytidine acetate ligase from Halothermothrix orenii (strain H 168 / OCM 544 / DSM 9562).